We begin with the raw amino-acid sequence, 234 residues long: Cytidylate kinase (234 aa).

10–18 serves as a coordination point for ATP; it reads GYSACGKST.

It belongs to the cytidylate kinase family. Type 1 subfamily.

The protein resides in the cytoplasm. It carries out the reaction CMP + ATP = CDP + ADP. The enzyme catalyses dCMP + ATP = dCDP + ADP. The protein is Cytidylate kinase of Cytophaga hutchinsonii (strain ATCC 33406 / DSM 1761 / CIP 103989 / NBRC 15051 / NCIMB 9469 / D465).